Here is a 185-residue protein sequence, read N- to C-terminus: Ribosome-recycling factor (185 aa).

It belongs to the RRF family.

It is found in the cytoplasm. Its function is as follows. Responsible for the release of ribosomes from messenger RNA at the termination of protein biosynthesis. May increase the efficiency of translation by recycling ribosomes from one round of translation to another. This Vesicomyosocius okutanii subsp. Calyptogena okutanii (strain HA) protein is Ribosome-recycling factor.